The chain runs to 278 residues: Large ribosomal subunit protein uL2 (278 aa).

The segment at 201 to 278 (HGNINDGKAG…IMRSRHQKKK (78 aa)) is disordered. The span at 210 to 221 (GRSRWRGKRPHV) shows a compositional bias: basic residues.

The protein belongs to the universal ribosomal protein uL2 family. Part of the 50S ribosomal subunit. Forms a bridge to the 30S subunit in the 70S ribosome.

One of the primary rRNA binding proteins. Required for association of the 30S and 50S subunits to form the 70S ribosome, for tRNA binding and peptide bond formation. It has been suggested to have peptidyltransferase activity; this is somewhat controversial. Makes several contacts with the 16S rRNA in the 70S ribosome. This Allorhizobium ampelinum (strain ATCC BAA-846 / DSM 112012 / S4) (Agrobacterium vitis (strain S4)) protein is Large ribosomal subunit protein uL2.